Reading from the N-terminus, the 279-residue chain is Shikimate dehydrogenase (NADP(+)) (279 aa).

Residues 18–20 (SRS) and threonine 64 each bind shikimate. The active-site Proton acceptor is lysine 68. Glutamate 80 provides a ligand contact to NADP(+). 2 residues coordinate shikimate: asparagine 89 and aspartate 104. NADP(+)-binding positions include 129 to 133 (GAGGA), 153 to 158 (NRTVSR), and isoleucine 218. Tyrosine 220 is a shikimate binding site. Glycine 241 lines the NADP(+) pocket.

Belongs to the shikimate dehydrogenase family. Homodimer.

It carries out the reaction shikimate + NADP(+) = 3-dehydroshikimate + NADPH + H(+). The protein operates within metabolic intermediate biosynthesis; chorismate biosynthesis; chorismate from D-erythrose 4-phosphate and phosphoenolpyruvate: step 4/7. Functionally, involved in the biosynthesis of the chorismate, which leads to the biosynthesis of aromatic amino acids. Catalyzes the reversible NADPH linked reduction of 3-dehydroshikimate (DHSA) to yield shikimate (SA). The sequence is that of Shikimate dehydrogenase (NADP(+)) from Chelativorans sp. (strain BNC1).